Reading from the N-terminus, the 178-residue chain is NADH-quinone oxidoreductase subunit B (178 aa).

The [4Fe-4S] cluster site is built by Cys-45, Cys-46, Cys-111, and Cys-140.

It belongs to the complex I 20 kDa subunit family. NDH-1 is composed of 15 different subunits. Subunits NuoB, C, D, E, F, and G constitute the peripheral sector of the complex. Requires [4Fe-4S] cluster as cofactor.

It is found in the cell membrane. The catalysed reaction is a quinone + NADH + 5 H(+)(in) = a quinol + NAD(+) + 4 H(+)(out). NDH-1 shuttles electrons from NADH, via FMN and iron-sulfur (Fe-S) centers, to quinones in the respiratory chain. The immediate electron acceptor for the enzyme in this species is believed to be a menaquinone. Couples the redox reaction to proton translocation (for every two electrons transferred, four hydrogen ions are translocated across the cytoplasmic membrane), and thus conserves the redox energy in a proton gradient. This Deinococcus deserti (strain DSM 17065 / CIP 109153 / LMG 22923 / VCD115) protein is NADH-quinone oxidoreductase subunit B.